We begin with the raw amino-acid sequence, 210 residues long: MTTKGILGRKVGMTQVFTENGELIPVTVIAATPNVVLQVKTNETDGYEAIQVGFEDKREVLSNKPAKGHVAKANTTPKRFIREFRDVALGDYEVGTEIKVDTFAAGDVVDVTGVTKGHGFQGNIKKDGQSRGPMGHGSRYHRRPGSMGAVINRVFKGKLLPGRMGNNQRTVQNLVVVSTDVEKNVILVKGNVPGAKNSMVTIKTAVKAHK.

Residues 120-143 (FQGNIKKDGQSRGPMGHGSRYHRR) form a disordered region.

It belongs to the universal ribosomal protein uL3 family. As to quaternary structure, part of the 50S ribosomal subunit. Forms a cluster with proteins L14 and L19.

In terms of biological role, one of the primary rRNA binding proteins, it binds directly near the 3'-end of the 23S rRNA, where it nucleates assembly of the 50S subunit. This chain is Large ribosomal subunit protein uL3, found in Latilactobacillus sakei subsp. sakei (strain 23K) (Lactobacillus sakei subsp. sakei).